The sequence spans 250 residues: Anaphase-promoting complex subunit DOC1 (250 aa).

A DOC domain is found at 60–246 (PTPENLQHMF…LPETNNVFQD (187 aa)).

This sequence belongs to the APC10 family. In terms of assembly, the APC/C is composed of at least 13 subunits that stay tightly associated throughout the cell cycle: APC1, APC2, APC4, APC5, APC9, APC11, CDC16, CDC23, CDC26, CDC27, DOC1, MND2 and SWM1.

The protein localises to the cytoplasm. It is found in the nucleus. It functions in the pathway protein modification; protein ubiquitination. Component of the anaphase promoting complex/cyclosome (APC/C), a cell cycle-regulated E3 ubiquitin-protein ligase complex that controls progression through mitosis and the G1 phase of the cell cycle. The APC/C is thought to confer substrate specificity and, in the presence of ubiquitin-conjugating E2 enzymes, it catalyzes the formation of protein-ubiquitin conjugates that are subsequently degraded by the 26S proteasome. In early mitosis, the APC/C is activated by CDC20 and targets securin PDS1, the B-type cyclin CLB5, and other anaphase inhibitory proteins for proteolysis, thereby triggering the separation of sister chromatids at the metaphase-to-anaphase transition. In late mitosis and in G1, degradation of CLB5 allows activation of the APC/C by CDH1, which is needed to destroy CDC20 and the B-type cyclin CLB2 to allow exit from mitosis and creating the low CDK state necessary for cytokinesis and for reforming prereplicative complexes in G1 prior to another round of replication. DOC1 is required, together with the coactivators CDH1 and CDC20, for recognition and binding of the substrates. The sequence is that of Anaphase-promoting complex subunit DOC1 (DOC1) from Saccharomyces cerevisiae (strain ATCC 204508 / S288c) (Baker's yeast).